We begin with the raw amino-acid sequence, 499 residues long: Eukaryotic peptide chain release factor GTP-binding subunit ERF3A (499 aa).

A disordered region spans residues Met-1–Ala-69. Residues Arg-41–Met-50 show a composition bias toward basic and acidic residues. Residues Lys-72 to Val-298 enclose the tr-type G domain. The interval Gly-81–Ser-88 is G1. GTP is bound at residue Asp-84–Thr-89. The interval Gly-137–Glu-141 is G2. The G3 stretch occupies residues Asp-158–Gly-161. GTP is bound by residues Asn-220 to Asp-223 and Ser-262 to Leu-264. The G4 stretch occupies residues Asn-220–Asp-223. Positions Ser-262–Leu-264 are G5.

Belongs to the TRAFAC class translation factor GTPase superfamily. Classic translation factor GTPase family. ERF3 subfamily. Component of the eRF1-eRF3-GTP ternary complex, composed of ETF1/ERF1 and ERF3 (GSPT1/ERF3A or GSPT2/ERF3B) and GTP. Component of the transient SURF (SMG1-UPF1-eRF1-eRF3) complex. The ETF1-GSPT1 complex interacts with JMJD4. Interacts with PABPC1. Interacts with SHFL.

The catalysed reaction is GTP + H2O = GDP + phosphate + H(+). GTPase component of the eRF1-eRF3-GTP ternary complex, a ternary complex that mediates translation termination in response to the termination codons UAA, UAG and UGA. GSPT1/ERF3A mediates ETF1/ERF1 delivery to stop codons: The eRF1-eRF3-GTP complex binds to a stop codon in the ribosomal A-site. GTP hydrolysis by GSPT1/ERF3A induces a conformational change that leads to its dissociation, permitting ETF1/ERF1 to accommodate fully in the A-site. Component of the transient SURF complex which recruits UPF1 to stalled ribosomes in the context of nonsense-mediated decay (NMD) of mRNAs containing premature stop codons. Required for SHFL-mediated translation termination which inhibits programmed ribosomal frameshifting (-1PRF) of mRNA from viruses and cellular genes. This is Eukaryotic peptide chain release factor GTP-binding subunit ERF3A (GSPT1) from Homo sapiens (Human).